The following is a 247-amino-acid chain: V-type proton ATPase subunit D (247 aa).

Belongs to the V-ATPase D subunit family. In terms of assembly, V-ATPase is a heteromultimeric enzyme made up of two complexes: the ATP-hydrolytic V1 complex and the proton translocation V0 complex. The V1 complex consists of three catalytic AB heterodimers that form a heterohexamer, three peripheral stalks each consisting of EG heterodimers, one central rotor including subunits D and F, and the regulatory subunits C and H. The proton translocation complex V0 consists of the proton transport subunit a, a ring of proteolipid subunits c9c'', rotary subunit d, subunits e and f, and the accessory subunits ATP6AP1/Ac45 and ATP6AP2/PRR. Interacts with SNX10. In terms of tissue distribution, expressed in brain (at protein level). Present in tissues active in secretion. Amounts elevated in brain, kidney and testis.

It is found in the membrane. The protein localises to the cytoplasmic vesicle. The protein resides in the clathrin-coated vesicle membrane. It localises to the cytoplasm. Its subcellular location is the cytoskeleton. It is found in the microtubule organizing center. The protein localises to the centrosome. The protein resides in the cell projection. It localises to the cilium. In terms of biological role, subunit of the V1 complex of vacuolar(H+)-ATPase (V-ATPase), a multisubunit enzyme composed of a peripheral complex (V1) that hydrolyzes ATP and a membrane integral complex (V0) that translocates protons. V-ATPase is responsible for acidifying and maintaining the pH of intracellular compartments and in some cell types, is targeted to the plasma membrane, where it is responsible for acidifying the extracellular environment. May play a role in cilium biogenesis through regulation of the transport and the localization of proteins to the cilium. In Bos taurus (Bovine), this protein is V-type proton ATPase subunit D (ATP6V1D).